The sequence spans 376 residues: Dihydroorotate dehydrogenase (quinone) (376 aa).

FMN-binding positions include 78-82 and Thr102; that span reads AGFDK. Lys82 lines the substrate pocket. 127–131 is a binding site for substrate; sequence NRMGF. The FMN site is built by Asn157 and Asn190. Asn190 is a binding site for substrate. Ser193 acts as the Nucleophile in catalysis. Asn195 is a binding site for substrate. The FMN site is built by Lys228 and Thr256. 257-258 is a substrate binding site; sequence NT. FMN is bound by residues Gly286, Gly315, and 336 to 337; that span reads YT.

Belongs to the dihydroorotate dehydrogenase family. Type 2 subfamily. In terms of assembly, monomer. FMN serves as cofactor.

It localises to the cell membrane. It catalyses the reaction (S)-dihydroorotate + a quinone = orotate + a quinol. It functions in the pathway pyrimidine metabolism; UMP biosynthesis via de novo pathway; orotate from (S)-dihydroorotate (quinone route): step 1/1. Functionally, catalyzes the conversion of dihydroorotate to orotate with quinone as electron acceptor. This Nostoc sp. (strain PCC 7120 / SAG 25.82 / UTEX 2576) protein is Dihydroorotate dehydrogenase (quinone).